We begin with the raw amino-acid sequence, 203 residues long: Secreted RxLR effector protein RXLR-C28 (203 aa).

Residues 1–24 (MKAVKLTAAVVVLFMAPYVPITSS) form the signal peptide. Asn-32 carries N-linked (GlcNAc...) asparagine glycosylation. The RxLR motif lies at 37 to 40 (RHLR). Asn-193 is a glycosylation site (N-linked (GlcNAc...) asparagine).

This sequence belongs to the RxLR effector family.

The protein localises to the secreted. Its subcellular location is the host cytoplasm. Its function is as follows. Secreted effector that does not suppress pattern-triggered immunity (PTI) in plant host. This is Secreted RxLR effector protein RXLR-C28 from Plasmopara halstedii (Downy mildew of sunflower).